A 150-amino-acid chain; its full sequence is Nucleoside diphosphate kinase (150 aa).

ATP is bound by residues Lys9, Phe57, Arg85, Thr91, Arg102, and Asn112. The active-site Pros-phosphohistidine intermediate is His115.

It belongs to the NDK family. As to quaternary structure, homotetramer. Mg(2+) is required as a cofactor.

The protein resides in the cytoplasm. The catalysed reaction is a 2'-deoxyribonucleoside 5'-diphosphate + ATP = a 2'-deoxyribonucleoside 5'-triphosphate + ADP. It carries out the reaction a ribonucleoside 5'-diphosphate + ATP = a ribonucleoside 5'-triphosphate + ADP. Functionally, major role in the synthesis of nucleoside triphosphates other than ATP. The ATP gamma phosphate is transferred to the NDP beta phosphate via a ping-pong mechanism, using a phosphorylated active-site intermediate. The polypeptide is Nucleoside diphosphate kinase (Symbiobacterium thermophilum (strain DSM 24528 / JCM 14929 / IAM 14863 / T)).